The chain runs to 239 residues: tRNA (guanine-N(7)-)-methyltransferase (239 aa).

S-adenosyl-L-methionine is bound by residues Glu-69, Glu-94, Asp-121, and Asp-144. The active site involves Asp-144. Substrate is bound at residue Lys-148. Residues 150 to 155 form an interaction with RNA region; that stretch reads RHNKRR. Residues Asp-180 and 217 to 220 each bind substrate; that span reads TKFE.

It belongs to the class I-like SAM-binding methyltransferase superfamily. TrmB family. In terms of assembly, monomer.

It catalyses the reaction guanosine(46) in tRNA + S-adenosyl-L-methionine = N(7)-methylguanosine(46) in tRNA + S-adenosyl-L-homocysteine. It functions in the pathway tRNA modification; N(7)-methylguanine-tRNA biosynthesis. In terms of biological role, catalyzes the formation of N(7)-methylguanine at position 46 (m7G46) in tRNA. In Sodalis glossinidius (strain morsitans), this protein is tRNA (guanine-N(7)-)-methyltransferase.